The sequence spans 411 residues: MINKNYSLSLWLKYLEQLDKKRIYNLTELKFLAKKLGLLKSESFIFTVAGTNGKGTTCAVLERLLLDSGYQVGLYTSPHLINFVERVRINGFVLHEEEHIDSFQNVELVRNGVLLTYFEFITLAALILFKRYSLDCIILKVGLGGRLDATNIIDSDISIITNIGIDHTSILGRDRISIAREKCGVFRKNKISVIGETDIPCSMYQIAKEKKTILKKIDIDWSWEKKRNYWNFFHSTIQLYNLPETQVPLSSAATALSTLYYSRFKIKEKIIRKSISNVQLPGRFQVISTFPYIIVDVAHNPNAAFYLSQKIDEINITGKIYAVVGILKDKDILGIIDPLANKIHHWFTAPLKTIRTATKHELKKFFPIHNTSILKSIEIAYKKALILVKKEDAIIIFGSFLTVSEFLSLKI.

53–56 (GKGT) contacts ATP. A Mg(2+)-binding site is contributed by Ser-77. 7,8-dihydropteroate-binding positions include 116–119 (TYFE) and 147–149 (LDA). His-167 contributes to the Mg(2+) binding site. ATP-binding residues include Arg-283 and Asp-296.

It belongs to the folylpolyglutamate synthase family. In terms of assembly, monomer. It depends on Mg(2+) as a cofactor.

It catalyses the reaction 7,8-dihydropteroate + L-glutamate + ATP = 7,8-dihydrofolate + ADP + phosphate + H(+). It carries out the reaction (6S)-5,6,7,8-tetrahydrofolyl-(gamma-L-Glu)(n) + L-glutamate + ATP = (6S)-5,6,7,8-tetrahydrofolyl-(gamma-L-Glu)(n+1) + ADP + phosphate + H(+). The catalysed reaction is 10-formyltetrahydrofolyl-(gamma-L-Glu)(n) + L-glutamate + ATP = 10-formyltetrahydrofolyl-(gamma-L-Glu)(n+1) + ADP + phosphate + H(+). The enzyme catalyses (6R)-5,10-methylenetetrahydrofolyl-(gamma-L-Glu)(n) + L-glutamate + ATP = (6R)-5,10-methylenetetrahydrofolyl-(gamma-L-Glu)(n+1) + ADP + phosphate + H(+). Its pathway is cofactor biosynthesis; tetrahydrofolate biosynthesis; 7,8-dihydrofolate from 2-amino-4-hydroxy-6-hydroxymethyl-7,8-dihydropteridine diphosphate and 4-aminobenzoate: step 2/2. It participates in cofactor biosynthesis; tetrahydrofolylpolyglutamate biosynthesis. Its function is as follows. Functions in two distinct reactions of the de novo folate biosynthetic pathway. Catalyzes the addition of a glutamate residue to dihydropteroate (7,8-dihydropteroate or H2Pte) to form dihydrofolate (7,8-dihydrofolate monoglutamate or H2Pte-Glu). Also catalyzes successive additions of L-glutamate to tetrahydrofolate or 10-formyltetrahydrofolate or 5,10-methylenetetrahydrofolate, leading to folylpolyglutamate derivatives. The sequence is that of Dihydrofolate synthase/folylpolyglutamate synthase (folC) from Buchnera aphidicola subsp. Acyrthosiphon pisum (strain APS) (Acyrthosiphon pisum symbiotic bacterium).